A 98-amino-acid chain; its full sequence is NADH-ubiquinone oxidoreductase chain 4L (98 aa).

The next 3 membrane-spanning stretches (helical) occupy residues 1-21 (MTPT…GMLT), 27-47 (VASL…ATLI), and 61-81 (IILL…LISI).

The protein belongs to the complex I subunit 4L family. Core subunit of respiratory chain NADH dehydrogenase (Complex I) which is composed of 45 different subunits.

The protein localises to the mitochondrion inner membrane. The enzyme catalyses a ubiquinone + NADH + 5 H(+)(in) = a ubiquinol + NAD(+) + 4 H(+)(out). Its function is as follows. Core subunit of the mitochondrial membrane respiratory chain NADH dehydrogenase (Complex I) which catalyzes electron transfer from NADH through the respiratory chain, using ubiquinone as an electron acceptor. Part of the enzyme membrane arm which is embedded in the lipid bilayer and involved in proton translocation. The chain is NADH-ubiquinone oxidoreductase chain 4L (MT-ND4L) from Macaca fascicularis (Crab-eating macaque).